Reading from the N-terminus, the 396-residue chain is NADH-quinone oxidoreductase subunit D 1 (396 aa).

Belongs to the complex I 49 kDa subunit family. NDH-1 is composed of 14 different subunits. Subunits NuoB, C, D, E, F, and G constitute the peripheral sector of the complex.

The protein localises to the cell inner membrane. It catalyses the reaction a quinone + NADH + 5 H(+)(in) = a quinol + NAD(+) + 4 H(+)(out). NDH-1 shuttles electrons from NADH, via FMN and iron-sulfur (Fe-S) centers, to quinones in the respiratory chain. The immediate electron acceptor for the enzyme in this species is believed to be ubiquinone. Couples the redox reaction to proton translocation (for every two electrons transferred, four hydrogen ions are translocated across the cytoplasmic membrane), and thus conserves the redox energy in a proton gradient. The chain is NADH-quinone oxidoreductase subunit D 1 from Rhizobium etli (strain ATCC 51251 / DSM 11541 / JCM 21823 / NBRC 15573 / CFN 42).